Reading from the N-terminus, the 972-residue chain is Multiple C2 domain and transmembrane region protein 8 (972 aa).

The region spanning 1-107 is the C2 1 domain; sequence MMSNLKLGVE…PYSEAVGLPY (107 aa). The disordered stretch occupies residues 142–203; it reads PNLISTKKIP…MMESSLYQAP (62 aa). The span at 150-159 shows a compositional bias: basic residues; sequence IPSKSRHKFH. The span at 161 to 173 shows a compositional bias: polar residues; sequence IPTNESNHSPRGN. Positions 179-194 are enriched in pro residues; that stretch reads PQPPPPQSQTALPPPM. C2 domains follow at residues 232–352, 384–507, and 543–669; these read GGGK…PEWY, ALNA…NRWF, and YSSD…SHSY. The Ca(2+) site is built by D265, D271, D318, D320, and D325. 2 helical membrane passes run 803–823 and 924–944; these read IIFL…SLCL and TVVL…LYIM.

The protein belongs to the MCTP family. The cofactor is Ca(2+). Expressed in root hairs.

It is found in the membrane. The protein resides in the vesicle. May function as a signaling molecule by regulating the trafficking of other regulators. The protein is Multiple C2 domain and transmembrane region protein 8 of Arabidopsis thaliana (Mouse-ear cress).